The chain runs to 446 residues: DDB1- and CUL4-associated factor 12-A (446 aa).

Residues 1–12 (MTRRSVSRKRRA) are compositionally biased toward basic residues. Positions 1–32 (MTRRSVSRKRRANPGSGPGEQSDWDHSAHKRK) are disordered. WD repeat units lie at residues 132–173 (SHQS…PVCV), 177–215 (GHND…VNKS), 245–284 (PVNC…SKLL), and 333–370 (EQGS…FLED).

Belongs to the WD repeat DCAF12 family. As to quaternary structure, component of the DCX(DCAF12) E3 ubiquitin ligase complex, at least composed of cul4 (cul4a or cul4b), ddb1, dcaf12 and rbx1.

The protein localises to the cytoplasm. Its subcellular location is the cytoskeleton. The protein resides in the microtubule organizing center. It is found in the centrosome. It localises to the nucleus. It participates in protein modification; protein ubiquitination. Its function is as follows. Substrate-recognition component of a DCX (DDB1-CUL4-X-box) E3 ubiquitin-protein ligase complex of the DesCEND (destruction via C-end degrons) pathway, which recognizes a C-degron located at the extreme C terminus of target proteins, leading to their ubiquitination and degradation. The C-degron recognized by the DesCEND pathway is usually a motif of less than ten residues and can be present in full-length proteins, truncated proteins or proteolytically cleaved forms. The DCX(DCAF12) complex specifically recognizes proteins with a diglutamate (Glu-Glu) at the C-terminus leading to their ubiquitination and degradation. Also directly recognizes the C-terminal glutamate-leucine (Glu-Leu) degron as an alternative degron in proteins leading to their ubiquitination and degradation. This Xenopus laevis (African clawed frog) protein is DDB1- and CUL4-associated factor 12-A (dcaf12-a).